The following is a 284-amino-acid chain: NAD kinase (284 aa).

Asp-60 functions as the Proton acceptor in the catalytic mechanism. NAD(+)-binding positions include 60-61 (DG), 134-135 (ND), Arg-145, Lys-162, Asp-164, 175-180 (TAYSFS), and Gln-234.

It belongs to the NAD kinase family. Requires a divalent metal cation as cofactor.

The protein localises to the cytoplasm. It catalyses the reaction NAD(+) + ATP = ADP + NADP(+) + H(+). Its function is as follows. Involved in the regulation of the intracellular balance of NAD and NADP, and is a key enzyme in the biosynthesis of NADP. Catalyzes specifically the phosphorylation on 2'-hydroxyl of the adenosine moiety of NAD to yield NADP. In Clostridium beijerinckii (strain ATCC 51743 / NCIMB 8052) (Clostridium acetobutylicum), this protein is NAD kinase.